We begin with the raw amino-acid sequence, 112 residues long: UPF0342 protein STH1710 (112 aa).

It belongs to the UPF0342 family.

The chain is UPF0342 protein STH1710 from Symbiobacterium thermophilum (strain DSM 24528 / JCM 14929 / IAM 14863 / T).